Consider the following 79-residue polypeptide: RNA-binding protein Hfq (79 aa).

The 60-residue stretch at 10–69 (DPFLNALRKEHVPVSIYLVNGIKLQGNIESFDQYVVLLRNTVTQMVYKHAISTVVPARAV) folds into the Sm domain.

Belongs to the Hfq family. Homohexamer.

Functionally, RNA chaperone that binds small regulatory RNA (sRNAs) and mRNAs to facilitate mRNA translational regulation in response to envelope stress, environmental stress and changes in metabolite concentrations. Also binds with high specificity to tRNAs. This Ralstonia nicotianae (strain ATCC BAA-1114 / GMI1000) (Ralstonia solanacearum) protein is RNA-binding protein Hfq.